Reading from the N-terminus, the 479-residue chain is Arf-GAP domain and FG repeat-containing protein 2 (479 aa).

One can recognise an Arf-GAP domain in the interval 27–153 (EVWCRRVREL…WYVPPEQVKG (127 aa)). Residues 47-70 (CFECAQRGVTYVDITVGSFVCTTC) form a C4-type zinc finger. Disordered regions lie at residues 150 to 223 (QVKG…TKKA) and 450 to 479 (LSQP…NPFL). Over residues 157–167 (SKGSVSATPVQ) the composition is skewed to polar residues. The residue at position 174 (Lys-174) is an N6-acetyllysine. Over residues 194 to 218 (SSQPGSQSQARSSSQARSSQPPSHS) the composition is skewed to low complexity. Polar residues predominate over residues 454–479 (AGISTNPFMTGSSAFASKPPTTNPFL).

Interacts with EPS15R.

In Mus musculus (Mouse), this protein is Arf-GAP domain and FG repeat-containing protein 2 (Agfg2).